Here is a 255-residue protein sequence, read N- to C-terminus: uncharacterized protein (255 aa).

This is an uncharacterized protein from Paracoccus denitrificans.